The chain runs to 80 residues: HssA/B-like protein 2 (80 aa).

Residues 1–29 (MSLLSALTSISKPMNTSSKSSVSSKNVSG) form a disordered region. The span at 9–29 (SISKPMNTSSKSSVSSKNVSG) shows a compositional bias: low complexity.

Belongs to the hssA/B family.

This is HssA/B-like protein 2 (hssl2) from Dictyostelium discoideum (Social amoeba).